We begin with the raw amino-acid sequence, 68 residues long: Figainin 1 (68 aa).

The signal sequence occupies residues 1–22; that stretch reads MAFLKKSLFLVLFLGLVSLSIG. The interval 23 to 45 is disordered; the sequence is EEEKREEEEKNEEGANQEENAEN. The propeptide occupies 23-47; that stretch reads EEEKREEEEKNEEGANQEENAENKE. A compositionally biased stretch (acidic residues) spans 26–42; the sequence is KREEEEKNEEGANQEEN. The residue at position 67 (lysine 67) is a Lysine amide.

In terms of tissue distribution, expressed by the skin glands.

The protein resides in the secreted. Its function is as follows. Antimicrobial peptide that displays antibacterial and antiprotozoal activity. Exhibits antibacterial activity against the Gram-positive bacteria S.epidermidis ATCC 12228 (MIC=2 uM), E.casseliflavus ATCC 700327 (MIC=16 uM), S.aureus ATCC 25923 (MIC=4 uM) and E.faecalis ATCC 29212 (MIC=8 uM), and the Gram-negative bacteria E.coli ATCC 25922 (MIC=16 uM) and K.pneumoniae ATCC 13883 (MIC=4 uM). Displays antiprotozoal activity against the epimastigote form of T.cruzi (IC(50)=15.9 uM). Does not show antimicrobial activity against the Gram-negative bacterium P.aeruginosa ATCC 27853, or the fungi C.albicans ATCC 90028 and C.parapsilosis ATCC 22019. Shows high cytolytic activity against human erythrocytes (HC(50)=10 uM), and displays anti-proliferative effects against various cancer cell lines including MCF-7 breast cancer cells (IC(50)=13.7 uM), HeLa cervical adenocarcinoma cells (IC(50)=11.1 uM) and B16F10 murine melanoma cells (IC(50)=10.5 uM). This is Figainin 1 from Boana raniceps (Chaco tree frog).